The following is a 98-amino-acid chain: Large ribosomal subunit protein eL21 (98 aa).

Basic residues predominate over residues 1 to 24 (MVKKAHSFRRKTRGKLSKHPRRRG). The interval 1 to 27 (MVKKAHSFRRKTRGKLSKHPRRRGLPP) is disordered.

The protein belongs to the eukaryotic ribosomal protein eL21 family. As to quaternary structure, part of the 50S ribosomal subunit.

The protein is Large ribosomal subunit protein eL21 of Thermococcus kodakarensis (strain ATCC BAA-918 / JCM 12380 / KOD1) (Pyrococcus kodakaraensis (strain KOD1)).